Reading from the N-terminus, the 271-residue chain is Large ribosomal subunit protein uL18 (271 aa).

The span at 245 to 264 shows a compositional bias: basic and acidic residues; the sequence is IRENPCPPKKERTKPADAKR. A disordered region spans residues 245–271; that stretch reads IRENPCPPKKERTKPADAKRWSPQAHL.

It belongs to the universal ribosomal protein uL18 family. As to quaternary structure, component of the large ribosomal subunit (LSU).

The protein resides in the cytoplasm. It localises to the nucleus. Component of the ribosome, a large ribonucleoprotein complex responsible for the synthesis of proteins in the cell. The small ribosomal subunit (SSU) binds messenger RNAs (mRNAs) and translates the encoded message by selecting cognate aminoacyl-transfer RNA (tRNA) molecules. The large subunit (LSU) contains the ribosomal catalytic site termed the peptidyl transferase center (PTC), which catalyzes the formation of peptide bonds, thereby polymerizing the amino acids delivered by tRNAs into a polypeptide chain. The nascent polypeptides leave the ribosome through a tunnel in the LSU and interact with protein factors that function in enzymatic processing, targeting, and the membrane insertion of nascent chains at the exit of the ribosomal tunnel. In Dunaliella salina (Green alga), this protein is Large ribosomal subunit protein uL18 (RPL5).